A 417-amino-acid chain; its full sequence is MPPLLRGGFGITFAAMQVQRLEPYFGFARFIARRMSCLRVLQISGSLTFTTLLALVPLFTIALSVISAFPVFSDYSTRFKIMLLSTLVPEFAGKVITVYMRQFADNAEKLTAAGIVMLGVTALMLMSTIERTFNAIWGVRRGRPWLQQSMVYWTVLTLGPLVLGGSLLSWRWLFKATRLEKNLPLLASVLEAGGTIVLTALVLALLYRIVPNRFVPFRHAVWGALVTSVLLELTKMGFGFYIGQVASYQLVYGAFASIPIFLLWVYCLWLVVLAGAVFTSALSYWEGDAWRRRNEPHRRFQDALEVLLLLDAAHARGEALTPRQLRQQVKVGYDELGLVLDRLAQRGYVQKGHGDAWVLMRRAAAINLSDLFQIFVYRRDASAGDALDATLAELLGPLTEQLQAVTVADLARRVGRK.

7 consecutive transmembrane segments (helical) span residues 52–72 (LLALVPLFTIALSVISAFPVF), 79–99 (FKIMLLSTLVPEFAGKVITVY), 110–130 (LTAAGIVMLGVTALMLMSTIE), 150–170 (MVYWTVLTLGPLVLGGSLLSW), 185–205 (LLASVLEAGGTIVLTALVLAL), 214–234 (FVPFRHAVWGALVTSVLLELT), and 258–278 (IPIFLLWVYCLWLVVLAGAVF).

It belongs to the UPF0761 family.

The protein localises to the cell inner membrane. The sequence is that of UPF0761 membrane protein CV_0810 from Chromobacterium violaceum (strain ATCC 12472 / DSM 30191 / JCM 1249 / CCUG 213 / NBRC 12614 / NCIMB 9131 / NCTC 9757 / MK).